The sequence spans 203 residues: Peroxiredoxin (203 aa).

Residues 3–156 form the Thioredoxin domain; sequence VVLGQKAPDF…IIRVIKALQF (154 aa). Cys44 serves as the catalytic Cysteine sulfenic acid (-SOH) intermediate. A substrate-binding site is contributed by Arg119.

This sequence belongs to the peroxiredoxin family. Prx6 subfamily. Homodecamer. Pentamer of dimers that assemble into a ring structure.

It is found in the cytoplasm. The catalysed reaction is a hydroperoxide + [thioredoxin]-dithiol = an alcohol + [thioredoxin]-disulfide + H2O. In terms of biological role, thiol-specific peroxidase that catalyzes the reduction of hydrogen peroxide and organic hydroperoxides to water and alcohols, respectively. Plays a role in cell protection against oxidative stress by detoxifying peroxides. The protein is Peroxiredoxin of Thermoplasma volcanium (strain ATCC 51530 / DSM 4299 / JCM 9571 / NBRC 15438 / GSS1).